Here is a 183-residue protein sequence, read N- to C-terminus: MEENIVNILKSIGEDPTREGLLNTPKRVKKAYDFLTSGYHVDITKVVNGAIFEESTEGMILVRDIEVYSLCEHHLLPFYGRAHVAYLPNKKIIGISKIPRIVDVFARRLQVQERLTEQIAYAVQEVLDPQGVAVVIKAKHLCMMMRGVEKQNSELFTSCLLGAFKENMVTRSEFLDLIRTGST.

Zn(2+) is bound by residues C71, H74, and C142.

Belongs to the GTP cyclohydrolase I family. As to quaternary structure, toroid-shaped homodecamer, composed of two pentamers of five dimers.

The enzyme catalyses GTP + H2O = 7,8-dihydroneopterin 3'-triphosphate + formate + H(+). It participates in cofactor biosynthesis; 7,8-dihydroneopterin triphosphate biosynthesis; 7,8-dihydroneopterin triphosphate from GTP: step 1/1. This is GTP cyclohydrolase 1 from Leptospira borgpetersenii serovar Hardjo-bovis (strain JB197).